The sequence spans 348 residues: Inositol 2-dehydrogenase/D-chiro-inositol 3-dehydrogenase (348 aa).

This sequence belongs to the Gfo/Idh/MocA family. Homotetramer.

The catalysed reaction is myo-inositol + NAD(+) = scyllo-inosose + NADH + H(+). It catalyses the reaction 1D-chiro-inositol + NAD(+) = scyllo-inosine + NADH + H(+). It functions in the pathway polyol metabolism; myo-inositol degradation into acetyl-CoA; acetyl-CoA from myo-inositol: step 1/7. Involved in the oxidation of myo-inositol (MI) and D-chiro-inositol (DCI) to 2-keto-myo-inositol (2KMI or 2-inosose) and 1-keto-D-chiro-inositol (1KDCI), respectively. In Halalkalibacterium halodurans (strain ATCC BAA-125 / DSM 18197 / FERM 7344 / JCM 9153 / C-125) (Bacillus halodurans), this protein is Inositol 2-dehydrogenase/D-chiro-inositol 3-dehydrogenase.